The following is a 215-amino-acid chain: Holliday junction branch migration complex subunit RuvA (215 aa).

The domain I stretch occupies residues 1–67; it reads MIGWLQGERI…DDGSTLFGFC (67 aa). The interval 68 to 146 is domain II; sequence DQQERDLFRT…NWAPLQEPSL (79 aa). The flexible linker stretch occupies residues 147–158; sequence SLVDRSDVKAIP. The tract at residues 159–215 is domain III; sequence LGEPCLRDLQITLETLGYEDLEIRRAMRAVASGPDVPAEDDGDAWLRASLKWLSQSA.

This sequence belongs to the RuvA family. As to quaternary structure, homotetramer. Forms an RuvA(8)-RuvB(12)-Holliday junction (HJ) complex. HJ DNA is sandwiched between 2 RuvA tetramers; dsDNA enters through RuvA and exits via RuvB. An RuvB hexamer assembles on each DNA strand where it exits the tetramer. Each RuvB hexamer is contacted by two RuvA subunits (via domain III) on 2 adjacent RuvB subunits; this complex drives branch migration. In the full resolvosome a probable DNA-RuvA(4)-RuvB(12)-RuvC(2) complex forms which resolves the HJ.

The protein localises to the cytoplasm. In terms of biological role, the RuvA-RuvB-RuvC complex processes Holliday junction (HJ) DNA during genetic recombination and DNA repair, while the RuvA-RuvB complex plays an important role in the rescue of blocked DNA replication forks via replication fork reversal (RFR). RuvA specifically binds to HJ cruciform DNA, conferring on it an open structure. The RuvB hexamer acts as an ATP-dependent pump, pulling dsDNA into and through the RuvAB complex. HJ branch migration allows RuvC to scan DNA until it finds its consensus sequence, where it cleaves and resolves the cruciform DNA. This Synechococcus sp. (strain WH7803) protein is Holliday junction branch migration complex subunit RuvA.